The sequence spans 323 residues: Beta-ketoacyl-[acyl-carrier-protein] synthase III (323 aa).

Catalysis depends on residues C114 and H250. Residues 251–255 form an ACP-binding region; sequence QANLR. N280 is a catalytic residue.

It belongs to the thiolase-like superfamily. FabH family. In terms of assembly, homodimer.

It localises to the cytoplasm. The catalysed reaction is malonyl-[ACP] + acetyl-CoA + H(+) = 3-oxobutanoyl-[ACP] + CO2 + CoA. The protein operates within lipid metabolism; fatty acid biosynthesis. Functionally, catalyzes the condensation reaction of fatty acid synthesis by the addition to an acyl acceptor of two carbons from malonyl-ACP. Catalyzes the first condensation reaction which initiates fatty acid synthesis and may therefore play a role in governing the total rate of fatty acid production. Possesses both acetoacetyl-ACP synthase and acetyl transacylase activities. Its substrate specificity determines the biosynthesis of branched-chain and/or straight-chain of fatty acids. This Cereibacter sphaeroides (strain ATCC 17029 / ATH 2.4.9) (Rhodobacter sphaeroides) protein is Beta-ketoacyl-[acyl-carrier-protein] synthase III.